The primary structure comprises 245 residues: MKKKSSDFCLCNERKSQLSKFLENLSIDFSNFDLLNTALCHSSYSNELDQKSSNNERLEFLGDSVLNLIITDHLYKTYPNKSEGELSKARSYIVSEDSLSNIAREINLGSYILLGRGEESNDGRNKKGILADAIEAFVGAIYLDSGFSRATEFVVGLFDMYIRLMFNRGDFKDYKSLLQEYVQKKYKISPSYKLDKEIGPDHDKVFCVELYVGENFISNGKGKSKKEAEMRAAEVALKAMENINL.

The region spanning L18–G146 is the RNase III domain. Position 59 (E59) interacts with Mg(2+). D63 is a catalytic residue. D132 and E135 together coordinate Mg(2+). E135 is an active-site residue. The DRBM domain maps to D173–N242.

The protein belongs to the ribonuclease III family. In terms of assembly, homodimer. Requires Mg(2+) as cofactor.

Its subcellular location is the cytoplasm. The catalysed reaction is Endonucleolytic cleavage to 5'-phosphomonoester.. Digests double-stranded RNA. Involved in the processing of primary rRNA transcript to yield the immediate precursors to the large and small rRNAs (23S and 16S). Processes some mRNAs, and tRNAs when they are encoded in the rRNA operon. Processes pre-crRNA and tracrRNA of type II CRISPR loci if present in the organism. The sequence is that of Ribonuclease 3 from Borreliella burgdorferi (strain ATCC 35210 / DSM 4680 / CIP 102532 / B31) (Borrelia burgdorferi).